A 353-amino-acid chain; its full sequence is MTIAIGKSSKEPKDLFDSMDDWLRRDRFVFVGWSGLLLFPCAYFALGGWFTGTTFVTSWYTHGLASSYLEGCNFLTAAVSTPANSLAHSLLLLWGPEAQGDFTRWCQLGGLWTFVALHGSFGLIGFMLRQFELARSVQLRPYNAIAFSGPISVFVSVSLIYPLGQAGWFFAPSFGVAAIFRFILFFQGFHNWTLNPFHMMGVAGVLGAALLCAIHGATVENTLFEDGDGANTFRAFNPTQSEETYSMVTANRFWSQIFGVAFSNKRWLHFFMLFVPVTGLWMSAIGVVGLALNLRAYDFVSQEIRAAEDPEFETFYTKNILLNEGIRAWMAAQDQPHENLVFPEEVLPRGNAL.

Thr2 bears the N-acetylthreonine mark. Thr2 carries the post-translational modification Phosphothreonine. A helical transmembrane segment spans residues 41–61 (CAYFALGGWFTGTTFVTSWYT). His118 serves as a coordination point for chlorophyll a. A helical transmembrane segment spans residues 125–141 (GFMLRQFELARSVQLRP). Residues Gln130 and Asn143 each contribute to the pheophytin a site. The chain crosses the membrane as a helical span at residues 153–166 (VFVSVSLIYPLGQA). Position 198 (His198) interacts with chlorophyll a. A helical transmembrane segment spans residues 208–228 (AALLCAIHGATVENTLFEDGD). A plastoquinone is bound by residues His215 and Phe262. His215 serves as a coordination point for Fe cation. Residue His269 participates in Fe cation binding. A helical transmembrane segment spans residues 279-295 (GLWMSAIGVVGLALNLR).

This sequence belongs to the reaction center PufL/M/PsbA/D family. As to quaternary structure, PSII is composed of 1 copy each of membrane proteins PsbA, PsbB, PsbC, PsbD, PsbE, PsbF, PsbH, PsbI, PsbJ, PsbK, PsbL, PsbM, PsbT, PsbX, PsbY, PsbZ, Psb30/Ycf12, at least 3 peripheral proteins of the oxygen-evolving complex and a large number of cofactors. It forms dimeric complexes. The cofactor is The D1/D2 heterodimer binds P680, chlorophylls that are the primary electron donor of PSII, and subsequent electron acceptors. It shares a non-heme iron and each subunit binds pheophytin, quinone, additional chlorophylls, carotenoids and lipids. There is also a Cl(-1) ion associated with D1 and D2, which is required for oxygen evolution. The PSII complex binds additional chlorophylls, carotenoids and specific lipids..

It is found in the plastid. Its subcellular location is the chloroplast thylakoid membrane. The catalysed reaction is 2 a plastoquinone + 4 hnu + 2 H2O = 2 a plastoquinol + O2. Functionally, photosystem II (PSII) is a light-driven water:plastoquinone oxidoreductase that uses light energy to abstract electrons from H(2)O, generating O(2) and a proton gradient subsequently used for ATP formation. It consists of a core antenna complex that captures photons, and an electron transfer chain that converts photonic excitation into a charge separation. The D1/D2 (PsbA/PsbD) reaction center heterodimer binds P680, the primary electron donor of PSII as well as several subsequent electron acceptors. D2 is needed for assembly of a stable PSII complex. The protein is Photosystem II D2 protein of Angiopteris evecta (Mule's foot fern).